The primary structure comprises 213 residues: Thymidylate kinase (213 aa).

Gly10–Thr17 is an ATP binding site.

This sequence belongs to the thymidylate kinase family.

The catalysed reaction is dTMP + ATP = dTDP + ADP. Phosphorylation of dTMP to form dTDP in both de novo and salvage pathways of dTTP synthesis. This chain is Thymidylate kinase, found in Klebsiella pneumoniae (strain 342).